The sequence spans 614 residues: Dihydroxy-acid dehydratase (614 aa).

Aspartate 81 lines the Mg(2+) pocket. A [2Fe-2S] cluster-binding site is contributed by cysteine 122. Mg(2+) is bound by residues aspartate 123 and lysine 124. Lysine 124 carries the post-translational modification N6-carboxylysine. Cysteine 195 contributes to the [2Fe-2S] cluster binding site. Glutamate 491 is a binding site for Mg(2+). Serine 517 acts as the Proton acceptor in catalysis.

Belongs to the IlvD/Edd family. As to quaternary structure, homodimer. [2Fe-2S] cluster is required as a cofactor. Requires Mg(2+) as cofactor.

The catalysed reaction is (2R)-2,3-dihydroxy-3-methylbutanoate = 3-methyl-2-oxobutanoate + H2O. The enzyme catalyses (2R,3R)-2,3-dihydroxy-3-methylpentanoate = (S)-3-methyl-2-oxopentanoate + H2O. Its pathway is amino-acid biosynthesis; L-isoleucine biosynthesis; L-isoleucine from 2-oxobutanoate: step 3/4. It participates in amino-acid biosynthesis; L-valine biosynthesis; L-valine from pyruvate: step 3/4. Functionally, functions in the biosynthesis of branched-chain amino acids. Catalyzes the dehydration of (2R,3R)-2,3-dihydroxy-3-methylpentanoate (2,3-dihydroxy-3-methylvalerate) into 2-oxo-3-methylpentanoate (2-oxo-3-methylvalerate) and of (2R)-2,3-dihydroxy-3-methylbutanoate (2,3-dihydroxyisovalerate) into 2-oxo-3-methylbutanoate (2-oxoisovalerate), the penultimate precursor to L-isoleucine and L-valine, respectively. The sequence is that of Dihydroxy-acid dehydratase from Nitrobacter winogradskyi (strain ATCC 25391 / DSM 10237 / CIP 104748 / NCIMB 11846 / Nb-255).